Consider the following 330-residue polypeptide: Beta-ketoacyl-[acyl-carrier-protein] synthase III 2 (330 aa).

Active-site residues include Cys-118 and His-246. The interval 247-251 (QANLR) is ACP-binding. The active site involves Asn-276.

It belongs to the thiolase-like superfamily. FabH family. Homodimer.

It is found in the cytoplasm. The enzyme catalyses malonyl-[ACP] + acetyl-CoA + H(+) = 3-oxobutanoyl-[ACP] + CO2 + CoA. The protein operates within lipid metabolism; fatty acid biosynthesis. Catalyzes the condensation reaction of fatty acid synthesis by the addition to an acyl acceptor of two carbons from malonyl-ACP. Catalyzes the first condensation reaction which initiates fatty acid synthesis and may therefore play a role in governing the total rate of fatty acid production. Possesses both acetoacetyl-ACP synthase and acetyl transacylase activities. Its substrate specificity determines the biosynthesis of branched-chain and/or straight-chain of fatty acids. The polypeptide is Beta-ketoacyl-[acyl-carrier-protein] synthase III 2 (Streptomyces coelicolor (strain ATCC BAA-471 / A3(2) / M145)).